A 122-amino-acid chain; its full sequence is Small ribosomal subunit protein uS13 (122 aa).

The tract at residues 99 to 122 (RGQRTHTNARTRKGPAKAIAGKKK) is disordered.

The protein belongs to the universal ribosomal protein uS13 family. In terms of assembly, part of the 30S ribosomal subunit. Forms a loose heterodimer with protein S19. Forms two bridges to the 50S subunit in the 70S ribosome.

In terms of biological role, located at the top of the head of the 30S subunit, it contacts several helices of the 16S rRNA. In the 70S ribosome it contacts the 23S rRNA (bridge B1a) and protein L5 of the 50S subunit (bridge B1b), connecting the 2 subunits; these bridges are implicated in subunit movement. Contacts the tRNAs in the A and P-sites. The chain is Small ribosomal subunit protein uS13 from Rhizobium leguminosarum bv. trifolii (strain WSM2304).